A 1522-amino-acid polypeptide reads, in one-letter code: Sodium channel protein 1 brain (1522 aa).

The Cytoplasmic segment spans residues 1-50 (MDEKYTAKNRDKTFVVIEKRFKKNIIHRFSAKRSLFLFTPRNPIRRLAVC). An I repeat occupies 41–342 (RNPIRRLAVC…VATAYELEVK (302 aa)). The chain crosses the membrane as a helical span at residues 51 to 70 (IATNVCFDYFLMFTIMINCV). The Extracellular portion of the chain corresponds to 71-77 (FLAMPDI). Residues 78–99 (SEFAEYIFLGIYTMEMAIKLVA) traverse the membrane as a helical segment. Over 100–112 (GGFFIDKYTYLRD) the chain is Cytoplasmic. A helical membrane pass occupies residues 113 to 134 (AWNCLDFTVIMISYITLLLQTI). Over 135–143 (NDKVISDIT) the chain is Extracellular. Residues 144–167 (GLRTFRVLRALRTLSIIPGLKTMV) form a helical; Voltage-sensor membrane-spanning segment. The Cytoplasmic segment spans residues 168–179 (NALLRALRMLIS). Residues 180-201 (VLILILFCLWIFSQAGVQLFGG) form a helical membrane-spanning segment. At 202–278 (ALRHKCVLQI…PNYGYTNFDS (77 aa)) the chain is on the extracellular side. Cys-207 and Cys-255 are joined by a disulfide. Residues Asn-248 and Asn-258 are each glycosylated (N-linked (GlcNAc...) asparagine). The segment at residues 279–303 (IGWSMLISFQLLTQDYWEDVYNKVI) is an intramembrane region (pore-forming). Over 304-308 (RAHSP) the chain is Extracellular. The helical transmembrane segment at 309-331 (WTVIYFIVINFFGSLYLMNLMLA) threads the bilayer. The Cytoplasmic portion of the chain corresponds to 332–406 (VVATAYELEV…WLRVQSFAHC (75 aa)). Residues 393-647 (CYNPWLRVQS…EQEVEVSSFA (255 aa)) form an II repeat. A helical membrane pass occupies residues 407–426 (IITDSFTEVFIIFIIVLNTV). Residues 427–442 (FLAMEHHGMSMELKNV) are Extracellular-facing. The helical transmembrane segment at 443-464 (LKVANYVFTTVFVLEAILKLLA) threads the bilayer. Residues 465 to 472 (FNKQYFKS) are Cytoplasmic-facing. The helical transmembrane segment at 473–491 (GWNICDLVVVVASLIDLGV) threads the bilayer. At 492-498 (EGLKGVS) the chain is on the extracellular side. A helical; Voltage-sensor membrane pass occupies residues 499–522 (VFRSFRLLRVFHLAQSWTTMRLLL). Residues 523 to 531 (CIILNTLGS) lie on the Cytoplasmic side of the membrane. The chain crosses the membrane as a helical span at residues 532–553 (LGYLTIILIIVIYIFAVTGLQL). The Extracellular segment spans residues 554-575 (FHTEYTPDKFRGEPVPRWNFND). An intramembrane region (pore-forming) is located at residues 576–596 (FLHSFMMVFRILCGEWIEPMY). The Extracellular portion of the chain corresponds to 597–607 (DCMRACNGLCF). A disulfide bridge links Cys-598 with Cys-606. Residues 608–628 (LIFIPVTVFGKTLFFLFIGLV) form a helical membrane-spanning segment. The Cytoplasmic segment spans residues 629–777 (LGAFGSDTVE…WNNFRRQLMM (149 aa)). The III repeat unit spans residues 770-1074 (NFRRQLMMVC…QNYYNTLKKL (305 aa)). Residues 778–797 (VCENKYFETGVLVIIFASSI) traverse the membrane as a helical segment. The Extracellular segment spans residues 798–815 (LLAFEDIYLNEKPRLKLA). A helical transmembrane segment spans residues 816–837 (IFYLDITFCLLFFLEMVLKLVA). Residues 838 to 846 (LGFVHYYTH) are Cytoplasmic-facing. Residues 847-868 (FWTILDFTIVIITVISLAASGL) form a helical membrane-spanning segment. Over 869-874 (GMEQIT) the chain is Extracellular. The helical; Voltage-sensor transmembrane segment at 875-898 (AFRSLRTLRALRPLRAVSRWQGMK) threads the bilayer. The Cytoplasmic segment spans residues 899–915 (IIVNALMLSIPSIFNVL). The helical transmembrane segment at 916–937 (LVCVVFWLIFAIMGVQLFAGKF) threads the bilayer. The Extracellular segment spans residues 938–976 (YKCVNETNMRIPPTEVANKIECYNKNYTWVNSNVNFDNV). 2 N-linked (GlcNAc...) asparagine glycosylation sites follow: Asn-942 and Asn-963. The pore-forming intramembrane region spans 977-998 (GGAFLALFQVATFEGWMEIMAD). Over 999–1009 (AVDVTEVDEQP) the chain is Extracellular. Residues 1010-1022 (KFEATVYYYFYFV) traverse the membrane as a helical segment. The Cytoplasmic segment spans residues 1023 to 1100 (LFIIFGSFFV…QAVVYDLVMS (78 aa)). Thr-1076 carries the phosphothreonine; by PKC modification. The IV repeat unit spans residues 1083–1386 (VKRPKNKCQA…WEQYDPLATQ (304 aa)). A helical membrane pass occupies residues 1101-1120 (NQFEIFITTIIITNMIFMAF). Over 1121-1132 (EHYNQSEVVTEV) the chain is Extracellular. The N-linked (GlcNAc...) asparagine glycan is linked to Asn-1124. The chain crosses the membrane as a helical span at residues 1133 to 1154 (LATANIAFTILYAVEAIIKIIG). Residues 1155 to 1162 (LRIHYLRN) lie on the Cytoplasmic side of the membrane. A helical membrane pass occupies residues 1163–1184 (LWNVFDFLVVTLSVMDAFLNDI). Topologically, residues 1185–1194 (FGDGIFMNPS) are extracellular. The chain crosses the membrane as a helical; Voltage-sensor span at residues 1195–1218 (LLRVARMFRIGRIIRLIKWAKGMR). The Cytoplasmic segment spans residues 1219-1236 (KLLFALVISLPALFNIGA). Residues 1237-1258 (LLMLVMFIYTIIGMSSFGQIKL) form a helical membrane-spanning segment. The Extracellular portion of the chain corresponds to 1259–1270 (SGALNDQVNFQT). Residues 1271–1293 (FGKTFLLLVRLATSAGWNDILGP) constitute an intramembrane region (pore-forming). The Extracellular segment spans residues 1294–1323 (LLIQPPNCDPNYITTSTGEKIKVVNGDCGM). The chain crosses the membrane as a helical span at residues 1324–1346 (PWLAISYMVSYIIIVFMIVFNMY). The Cytoplasmic portion of the chain corresponds to 1347-1522 (IAVILENFNQ…FIISAPETAV (176 aa)).

The protein belongs to the sodium channel (TC 1.A.1.10) family.

It localises to the cell membrane. Its function is as follows. Mediates the voltage-dependent sodium ion permeability of excitable membranes. Assuming opened or closed conformations in response to the voltage difference across the membrane, the protein forms a sodium-selective channel through which Na(+) ions may pass in accordance with their electrochemical gradient. The protein is Sodium channel protein 1 brain of Heterololigo bleekeri (Spear squid).